We begin with the raw amino-acid sequence, 855 residues long: DNA mismatch repair protein MutS (855 aa).

G615 to S622 serves as a coordination point for ATP.

Belongs to the DNA mismatch repair MutS family.

Its function is as follows. This protein is involved in the repair of mismatches in DNA. It is possible that it carries out the mismatch recognition step. This protein has a weak ATPase activity. The chain is DNA mismatch repair protein MutS from Aliivibrio salmonicida (strain LFI1238) (Vibrio salmonicida (strain LFI1238)).